The sequence spans 129 residues: MKLFTGLVFCSLVLGVSSQWYSFLGEAAQGAWDMWRAYSDMREANYIGADKYFHARGNYDAAQRGPGGAWAAKVISDARENSQRVTDFFRHGNSGHGAEDSKADQAANEWGRSGKDPNHFRPAGLPSKY.

Positions 1–18 are cleaved as a signal peptide; that stretch reads MKLFTGLVFCSLVLGVSS. The residue at position 19 (Q19) is a Pyrrolidone carboxylic acid. Positions 88–129 are disordered; that stretch reads FFRHGNSGHGAEDSKADQAANEWGRSGKDPNHFRPAGLPSKY. The propeptide at 112-129 is often cleaved during amyloidogenesis; the sequence is RSGKDPNHFRPAGLPSKY.

The protein belongs to the SAA family. Expressed by the liver; secreted in plasma.

The protein resides in the secreted. Its function is as follows. Major acute phase reactant. Apolipoprotein of the HDL complex. The chain is Serum amyloid A protein (SAA1) from Felis catus (Cat).